The following is a 315-amino-acid chain: MNQLESLKQFTTVVADTGDFRQLGQFKPQDATTNPSLILKAVQKADYQPLLKETVARFKGRALDEVMDRLLVRFGCEILSIIPGRVSTEVDARLSFDANASYTRGERIVELYQAEGIHIDRVLIKVAATWEGIQAAERLERRGIHTNLTLLFSFCQAVACGQARVQLISPFVGRIYDWYKKSAGAAWDEAANAGANDPGVKSVRQIYNHYKHFGIATEVMGASFRNAGQITALAGCDLLTISPELLAQLAASEAPLARSLDAGAARSLDLPAVNYDETGFRYALNEDAMATEKLAEGIRAFAADAIKLEQLMVAA.

Catalysis depends on K125, which acts as the Schiff-base intermediate with substrate.

It belongs to the transaldolase family. Type 1 subfamily. Homodimer.

The protein localises to the cytoplasm. The catalysed reaction is D-sedoheptulose 7-phosphate + D-glyceraldehyde 3-phosphate = D-erythrose 4-phosphate + beta-D-fructose 6-phosphate. It functions in the pathway carbohydrate degradation; pentose phosphate pathway; D-glyceraldehyde 3-phosphate and beta-D-fructose 6-phosphate from D-ribose 5-phosphate and D-xylulose 5-phosphate (non-oxidative stage): step 2/3. In terms of biological role, transaldolase is important for the balance of metabolites in the pentose-phosphate pathway. This chain is Transaldolase, found in Polaromonas sp. (strain JS666 / ATCC BAA-500).